A 113-amino-acid polypeptide reads, in one-letter code: U11-theraphotoxin-Hhn1a (113 aa).

Residues 1–21 (MNTVRVTFLLVFVLAVSLGQA) form the signal peptide. Positions 22 to 74 (DKDENRMEMQEKTEQGKSYLDFAENLLLQKLEELEAKPLEEDSEESRNSRQKR) are excised as a propeptide. Residues 57 to 69 (AKPLEEDSEESRN) show a composition bias toward basic and acidic residues. The tract at residues 57-83 (AKPLEEDSEESRNSRQKRCIGEGVPCD) is disordered. Intrachain disulfides connect Cys75–Cys90, Cys82–Cys95, and Cys89–Cys110.

Belongs to the neurotoxin 14 (magi-1) family. 01 (HNTX-16) subfamily. In terms of tissue distribution, expressed by the venom gland.

It is found in the secreted. In terms of biological role, probable ion channel inhibitor. This is U11-theraphotoxin-Hhn1a from Cyriopagopus hainanus (Chinese bird spider).